A 147-amino-acid chain; its full sequence is Nucleoside diphosphate kinase (147 aa).

Residues Lys-9, Phe-57, Arg-85, Thr-91, Arg-102, and Asn-112 each contribute to the ATP site. His-115 acts as the Pros-phosphohistidine intermediate in catalysis.

The protein belongs to the NDK family. The cofactor is Mg(2+).

Its subcellular location is the cytoplasm. The enzyme catalyses a 2'-deoxyribonucleoside 5'-diphosphate + ATP = a 2'-deoxyribonucleoside 5'-triphosphate + ADP. It catalyses the reaction a ribonucleoside 5'-diphosphate + ATP = a ribonucleoside 5'-triphosphate + ADP. Functionally, major role in the synthesis of nucleoside triphosphates other than ATP. The ATP gamma phosphate is transferred to the NDP beta phosphate via a ping-pong mechanism, using a phosphorylated active-site intermediate. This chain is Nucleoside diphosphate kinase, found in Ignicoccus hospitalis (strain KIN4/I / DSM 18386 / JCM 14125).